We begin with the raw amino-acid sequence, 291 residues long: 4-hydroxy-tetrahydrodipicolinate synthase (291 aa).

Threonine 44 contributes to the pyruvate binding site. Tyrosine 132 (proton donor/acceptor) is an active-site residue. The active-site Schiff-base intermediate with substrate is lysine 160. Position 202 (isoleucine 202) interacts with pyruvate.

Belongs to the DapA family. In terms of assembly, homotetramer; dimer of dimers.

It is found in the cytoplasm. It carries out the reaction L-aspartate 4-semialdehyde + pyruvate = (2S,4S)-4-hydroxy-2,3,4,5-tetrahydrodipicolinate + H2O + H(+). The protein operates within amino-acid biosynthesis; L-lysine biosynthesis via DAP pathway; (S)-tetrahydrodipicolinate from L-aspartate: step 3/4. Functionally, catalyzes the condensation of (S)-aspartate-beta-semialdehyde [(S)-ASA] and pyruvate to 4-hydroxy-tetrahydrodipicolinate (HTPA). The protein is 4-hydroxy-tetrahydrodipicolinate synthase of Rhodospirillum centenum (strain ATCC 51521 / SW).